The chain runs to 855 residues: MPDKAEVFFDEGVLDFADVDEIVLDVGEEALAEALAHRHRRMIVFQGDEGKAEAAGVVTAGAADVLFDVRDRPISVLYVTDSLKEDTYARERYEEFRRVLEGFAEEANFEYELEALTFSGSKRALGTTWDLMVIDLSYDLDPDAIGRLVETVRGGGLVIFQTPPFDRWRNMWTAFHKSLVTPPYTLDHVGKRFNRRFIRKLKEHDGVWIVDTDEWTAEPEPSEDVDLEVEVKRRERPDLDPPDDAVLPEELYRMCATEDQFRALIRFEELLESNGKTALILTADRGRGKSALLGIAVAGAGVTTDVYDVVVTASEPENVAVLFEFLLEALRELGVEYDVERDDKGNIVYVETDDFVVEYERPSEASEIECDLMVVDEAASIHVPILERILDNNDKVVYSSTIHGYEGAGRGFSVRFLQNVRKRRDVRLIEFKMHEPIRYDSDDPIERWLFDTLLLDAEPADLDKEDLECVKEMRVEFEKPDLRYWFEDPEGEEELRQFIGIYVMAHYRNRPSDVMVLADAPHHEAYALKTETGKIVTALQVAREGTIPRDVITKMRRGYRPPGNVIPDLMVQHHDALDFPRMKGLRIVRIATHPDIMRHGLGSRALKELAKIAKKKDYDWIGTGFGANEELTRFWLRNGFVPVHISPNRNPVSGEYSVAVIRPISEEAEEIINRANFEFRIKLADWLGETHRDLEPEVARLLFEPMSSLRYRPTLTEGQLRRLKKYADMVHTYEIAADAVRELAKAYFLDTEDRPELSEEEELLLITKCLQRWKWADVADVLGEEVPDLMRSLRDLVGLLYEEYKEDLQRSAAVEGIRKAVERLADKGLTGTVIVEVEEGEPKEVIIRREERLEL.

ATP contacts are provided by residues Gln-260, 286–295 (GRGKSALLGI), and Arg-438. Positions 480–663 (PDLRYWFEDP…GEYSVAVIRP (184 aa)) constitute an N-acetyltransferase domain. Acetyl-CoA is bound by residues 590–592 (IAT), 597–603 (MRHGLGS), Glu-630, and Arg-637.

This sequence belongs to the RNA cytidine acetyltransferase family. TmcA subfamily.

The protein localises to the cytoplasm. It carries out the reaction cytidine(34) in elongator tRNA(Met) + acetyl-CoA + ATP + H2O = N(4)-acetylcytidine(34) in elongator tRNA(Met) + ADP + phosphate + CoA + H(+). Catalyzes the formation of N(4)-acetylcytidine (ac(4)C) at the wobble position of tRNA(Met), by using acetyl-CoA as an acetyl donor and ATP (or GTP). The protein is tRNA(Met) cytidine acetyltransferase TmcA of Methanopyrus kandleri (strain AV19 / DSM 6324 / JCM 9639 / NBRC 100938).